Consider the following 152-residue polypeptide: Snaclec anticoagulant protein subunit A (152 aa).

Residues 1-23 (MGRFIFVSFGLLVVYLSLSGTAA) form the signal peptide. One can recognise a C-type lectin domain in the interval 24 to 152 (DCSSSWSSYE…EQRDPFVCEA (129 aa)). 3 disulfides stabilise this stretch: cysteine 25–cysteine 36, cysteine 53–cysteine 150, and cysteine 125–cysteine 142. The Ca(2+) site is built by serine 64, glutamate 66, and glutamate 70. Residue glutamate 151 coordinates Ca(2+).

This sequence belongs to the snaclec family. Heterodimer of subunits A and B; disulfide-linked. In terms of tissue distribution, expressed by the venom gland.

It is found in the secreted. Its function is as follows. Anticoagulant protein which binds to the gamma-carboxyglutamic acid-domain regions of factors IX and factor X in the presence of calcium with a 1 to 1 stoichiometry. Also inhibits platelet aggregation by binding to platelet glycoprotein Ibalpha (GP1BA) and functioning as a blocker of vWF. Is devoid of hemorrhagic and lethal activities. Possesses antithrombotic and thrombolytic activities. Also hydrolyzes the Aalpha-chain of fibrinogen. Does not affect the Bbeta-chain and the gamma chain. The polypeptide is Snaclec anticoagulant protein subunit A (Deinagkistrodon acutus (Hundred-pace snake)).